The primary structure comprises 74 residues: Homeobox protein Hox-B8 (74 aa).

Over residues 1-24 the composition is skewed to low complexity; that stretch reads YTDCKLAASGLGEEAESSEQSPSP. Residues 1–28 form a disordered region; the sequence is YTDCKLAASGLGEEAESSEQSPSPTQLF. An Antp-type hexapeptide motif is present at residues 27 to 32; it reads LFPWMR. A DNA-binding region (homeobox) is located at residues 39–74; the sequence is RRRGRQTYSRYQTLELEKEFLFNPYLTRKRRIEVSR.

Belongs to the Antp homeobox family.

It localises to the nucleus. In terms of biological role, sequence-specific transcription factor which is part of a developmental regulatory system that provides cells with specific positional identities on the anterior-posterior axis. This chain is Homeobox protein Hox-B8 (HOXB8), found in Gallus gallus (Chicken).